A 221-amino-acid chain; its full sequence is Small ribosomal subunit protein uS3 (221 aa).

One can recognise a KH type-2 domain in the interval 39–108 (IRKFVKKRSY…NVIINIVEVK (70 aa)).

Belongs to the universal ribosomal protein uS3 family. As to quaternary structure, part of the 30S ribosomal subunit. Forms a tight complex with proteins S10 and S14.

Binds the lower part of the 30S subunit head. Binds mRNA in the 70S ribosome, positioning it for translation. This Clostridium novyi (strain NT) protein is Small ribosomal subunit protein uS3.